Consider the following 289-residue polypeptide: Protoheme IX farnesyltransferase 2 (289 aa).

9 helical membrane-spanning segments follow: residues 1-21 (MIKPGIIMGNLISVTGGFLLA), 28-48 (LTLMLMTILGLSLVVASGCGL), 76-96 (YSVLVFSLALGLIGFGLLAIF), 100-120 (IALLFAVIGYLVYVGIYSLYM), 125-145 (VYGTLIGSFSGAVPPVVGYCA), 155-175 (VILLLMFSLWQMPHSYAIAIF), 199-219 (LHIVLYIAVFSLVSALLPLAG), 221-241 (TGIAFMAVTCATSLWWLGMAL), and 260-280 (CSIVTITALSIAMAMDFQLVV).

It belongs to the UbiA prenyltransferase family. Protoheme IX farnesyltransferase subfamily.

It localises to the cell inner membrane. The catalysed reaction is heme b + (2E,6E)-farnesyl diphosphate + H2O = Fe(II)-heme o + diphosphate. The protein operates within porphyrin-containing compound metabolism; heme O biosynthesis; heme O from protoheme: step 1/1. Its function is as follows. Converts heme B (protoheme IX) to heme O by substitution of the vinyl group on carbon 2 of heme B porphyrin ring with a hydroxyethyl farnesyl side group. The protein is Protoheme IX farnesyltransferase 2 of Shewanella woodyi (strain ATCC 51908 / MS32).